A 130-amino-acid chain; its full sequence is Small ribosomal subunit protein uS11 (130 aa).

The protein belongs to the universal ribosomal protein uS11 family. Part of the 30S ribosomal subunit. Interacts with proteins S7 and S18. Binds to IF-3.

Its function is as follows. Located on the platform of the 30S subunit, it bridges several disparate RNA helices of the 16S rRNA. Forms part of the Shine-Dalgarno cleft in the 70S ribosome. In Prochlorococcus marinus (strain MIT 9301), this protein is Small ribosomal subunit protein uS11.